We begin with the raw amino-acid sequence, 394 residues long: Elongation factor Tu (394 aa).

The tr-type G domain occupies 10 to 204; that stretch reads KTHLNVGTIG…TLDTYIEDPV (195 aa). The segment at 19 to 26 is G1; that stretch reads GHVDHGKT. 19 to 26 is a GTP binding site; the sequence is GHVDHGKT. Position 26 (Thr-26) interacts with Mg(2+). The tract at residues 60 to 64 is G2; sequence GITIK. Residues 81 to 84 form a G3 region; sequence DCPG. GTP contacts are provided by residues 81-85 and 136-139; these read DCPGH and NKCD. Residues 136 to 139 are G4; it reads NKCD. Residues 174–176 are G5; the sequence is SAL.

Belongs to the TRAFAC class translation factor GTPase superfamily. Classic translation factor GTPase family. EF-Tu/EF-1A subfamily. As to quaternary structure, monomer.

The protein localises to the cytoplasm. It catalyses the reaction GTP + H2O = GDP + phosphate + H(+). GTP hydrolase that promotes the GTP-dependent binding of aminoacyl-tRNA to the A-site of ribosomes during protein biosynthesis. The polypeptide is Elongation factor Tu (Aster yellows witches'-broom phytoplasma (strain AYWB)).